A 112-amino-acid polypeptide reads, in one-letter code: uncharacterized protein (112 aa).

Residues 91 to 112 are disordered; the sequence is ENQRKKGTRKRRSSEVDSKEKS. Residues 103 to 112 are compositionally biased toward basic and acidic residues; sequence SSEVDSKEKS.

This is an uncharacterized protein from Caenorhabditis elegans.